A 572-amino-acid chain; its full sequence is Proline--tRNA ligase (572 aa).

It belongs to the class-II aminoacyl-tRNA synthetase family. ProS type 1 subfamily. As to quaternary structure, homodimer.

The protein resides in the cytoplasm. The catalysed reaction is tRNA(Pro) + L-proline + ATP = L-prolyl-tRNA(Pro) + AMP + diphosphate. Catalyzes the attachment of proline to tRNA(Pro) in a two-step reaction: proline is first activated by ATP to form Pro-AMP and then transferred to the acceptor end of tRNA(Pro). As ProRS can inadvertently accommodate and process non-cognate amino acids such as alanine and cysteine, to avoid such errors it has two additional distinct editing activities against alanine. One activity is designated as 'pretransfer' editing and involves the tRNA(Pro)-independent hydrolysis of activated Ala-AMP. The other activity is designated 'posttransfer' editing and involves deacylation of mischarged Ala-tRNA(Pro). The misacylated Cys-tRNA(Pro) is not edited by ProRS. In Enterobacter sp. (strain 638), this protein is Proline--tRNA ligase.